The primary structure comprises 97 residues: YcgL domain-containing protein PSPPH_1548 (97 aa).

The YcgL domain maps to 3–87 (RICSIYRSPK…AEDDYIEHLP (85 aa)).

This Pseudomonas savastanoi pv. phaseolicola (strain 1448A / Race 6) (Pseudomonas syringae pv. phaseolicola (strain 1448A / Race 6)) protein is YcgL domain-containing protein PSPPH_1548.